Reading from the N-terminus, the 200-residue chain is LHFPL tetraspan subfamily member 6 protein (200 aa).

A signal peptide spans 1–21 (MASSLTCAGVIWALLSFLCAA). The next 2 helical transmembrane spans lie at 84 to 104 (ICTV…LTAI) and 123 to 143 (GIQF…PLGW). Residue asparagine 154 is glycosylated (N-linked (GlcNAc...) asparagine). Residues 172-192 (CTGAGAAAAMVLCTWMACFAG) traverse the membrane as a helical segment.

Belongs to the LHFP family.

The protein resides in the membrane. The protein is LHFPL tetraspan subfamily member 6 protein of Danio rerio (Zebrafish).